The chain runs to 452 residues: MARRYFGTDGIRGKVGEGPITPEFVLRLGYAAGKVLAGADRWAKTGTRPTVLIGKDTRVSGYMLEAALEAGFSAAGVDVMLAGPMPTPGIAYLTRALRLAAGVVISASHNPYYDNGIKFFSADGNKLPDEVEAQIEEQLDQPLACAASEQLGKARRLDDAAGRYIEFCKSTFPAAFDLRGLKLVVDCAHGAAYDVAPHVFHELGADVIPIGVAPNGFNINDGVGATAPDALVRAVRANHADLGIALDGDADRLQVVDAAGRLYNGDELLYILVKDRIATEGKVEGAVGTLMTNMAVEVALQEAGVKFVRAAVGDRYVLEQLREHGWQLGAEGSGHILSLDRHSTGDGIVSALLVLAAMKRSDKTLAELLGGVTLFPQKLINVRMKPDADWKGSDVIRRAIAKAEDALNGRGRVLIRASGTEPVLRVMVEAENVADAVQYAESIASAVKQATA.

S108 acts as the Phosphoserine intermediate in catalysis. The Mg(2+) site is built by S108, D247, D249, and D251. S108 is subject to Phosphoserine.

The protein belongs to the phosphohexose mutase family. Mg(2+) serves as cofactor. In terms of processing, activated by phosphorylation.

It carries out the reaction alpha-D-glucosamine 1-phosphate = D-glucosamine 6-phosphate. Its function is as follows. Catalyzes the conversion of glucosamine-6-phosphate to glucosamine-1-phosphate. The chain is Phosphoglucosamine mutase from Paraburkholderia xenovorans (strain LB400).